The following is a 131-amino-acid chain: Global transcriptional regulator Spx (131 aa).

The cysteines at positions 10 and 13 are disulfide-linked.

Belongs to the ArsC family. Spx subfamily. Interacts with the C-terminal domain of the alpha subunit of the RNAP.

The protein localises to the cytoplasm. Global transcriptional regulator that plays a key role in stress response and exerts either positive or negative regulation of genes. Acts by interacting with the C-terminal domain of the alpha subunit of the RNA polymerase (RNAP). This interaction can enhance binding of RNAP to the promoter region of target genes and stimulate their transcription, or block interaction of RNAP with activator. This Shouchella clausii (strain KSM-K16) (Alkalihalobacillus clausii) protein is Global transcriptional regulator Spx.